Here is a 307-residue protein sequence, read N- to C-terminus: MANLQERGHLLTEQVNPLSQNLDQLSSLELVELFNSEDRKTIEAVAAAKVQIATAIEQTADRLRQGGRLFYVGAGTSGRLGVLDAAECPPTFCTPPELVQGIIAGGAGALVRSSEDLEDRAEDGDAAIAQRHITQLDVVVGITAGGTTPFVQGAINSARQRGALTIFIACVPAEQVSFTADIDIRLLTGPEILAGSTRLKAGTVTKLTLNILSTGVMVKLGKVYGNRMVDVAVTNQKLRDRALRILEDLTGLSREAAGFLLERSGKWVKLALVMHWTGLDKDAGDRLLSAHQGNLREAVASYKNQGN.

In terms of domain architecture, SIS spans 59–222 (TADRLRQGGR…STGVMVKLGK (164 aa)). The active-site Proton donor is E87. E118 is an active-site residue.

It belongs to the GCKR-like family. MurNAc-6-P etherase subfamily. As to quaternary structure, homodimer.

The enzyme catalyses N-acetyl-D-muramate 6-phosphate + H2O = N-acetyl-D-glucosamine 6-phosphate + (R)-lactate. It functions in the pathway amino-sugar metabolism; N-acetylmuramate degradation. Its function is as follows. Specifically catalyzes the cleavage of the D-lactyl ether substituent of MurNAc 6-phosphate, producing GlcNAc 6-phosphate and D-lactate. The protein is N-acetylmuramic acid 6-phosphate etherase of Trichormus variabilis (strain ATCC 29413 / PCC 7937) (Anabaena variabilis).